Consider the following 169-residue polypeptide: Macro domain-containing protein SCO6450 (169 aa).

One can recognise a Macro domain in the interval 1–169; that stretch reads MTGITLVQGD…AYEAFAARLG (169 aa).

This sequence belongs to the MacroD-type family.

The sequence is that of Macro domain-containing protein SCO6450 from Streptomyces coelicolor (strain ATCC BAA-471 / A3(2) / M145).